A 359-amino-acid chain; its full sequence is ATP-dependent 6-phosphofructokinase 1 (359 aa).

Residues G14, K78 to G79, and G115 to S118 each bind ATP. Position 116 (D116) interacts with Mg(2+). Residues T139–D141, R176, M183–R185, E236, R277, and H283–R286 each bind substrate. Catalysis depends on D141, which acts as the Proton acceptor.

Belongs to the phosphofructokinase type A (PFKA) family. Mixed-substrate PFK group III subfamily. Homodimer or homotetramer. Requires Mg(2+) as cofactor.

The protein localises to the cytoplasm. It carries out the reaction beta-D-fructose 6-phosphate + ATP = beta-D-fructose 1,6-bisphosphate + ADP + H(+). The protein operates within carbohydrate degradation; glycolysis; D-glyceraldehyde 3-phosphate and glycerone phosphate from D-glucose: step 3/4. In terms of biological role, catalyzes the phosphorylation of D-fructose 6-phosphate to fructose 1,6-bisphosphate by ATP, the first committing step of glycolysis. The polypeptide is ATP-dependent 6-phosphofructokinase 1 (Nostoc sp. (strain PCC 7120 / SAG 25.82 / UTEX 2576)).